We begin with the raw amino-acid sequence, 433 residues long: Ribosomal protein uS12 methylthiotransferase RimO (433 aa).

One can recognise an MTTase N-terminal domain in the interval 6-122 (QSIFLLSLGC…IISVLGGSYR (117 aa)). Residues C15, C51, C85, C146, C150, and C153 each contribute to the [4Fe-4S] cluster site. The Radical SAM core domain occupies 132–362 (LTPPHYAWLK…MELQESIAAE (231 aa)). Residues 365-432 (RELEGRVMKV…AYELHGRVND (68 aa)) enclose the TRAM domain.

Belongs to the methylthiotransferase family. RimO subfamily. Requires [4Fe-4S] cluster as cofactor.

The protein resides in the cytoplasm. It carries out the reaction L-aspartate(89)-[ribosomal protein uS12]-hydrogen + (sulfur carrier)-SH + AH2 + 2 S-adenosyl-L-methionine = 3-methylsulfanyl-L-aspartate(89)-[ribosomal protein uS12]-hydrogen + (sulfur carrier)-H + 5'-deoxyadenosine + L-methionine + A + S-adenosyl-L-homocysteine + 2 H(+). Functionally, catalyzes the methylthiolation of an aspartic acid residue of ribosomal protein uS12. The chain is Ribosomal protein uS12 methylthiotransferase RimO from Prosthecochloris aestuarii (strain DSM 271 / SK 413).